The sequence spans 413 residues: Phosphatidylcholine:ceramide cholinephosphotransferase 1 (413 aa).

In terms of domain architecture, SAM spans 7–70 (WSPKKVADWL…LDMIETLKME (64 aa)). S8 bears the Phosphoserine mark. Helical transmembrane passes span 136-156 (FLAF…ISVV), 184-204 (FSIC…QWLL), 215-235 (FFCI…VTTL), 276-296 (MCGD…YLFI), and 304-324 (LWWY…CILL). H285 is an active-site residue. Residues 325 to 413 (AHDHYTVDVV…VKYSRLVNDT (89 aa)) are Cytoplasmic-facing. Active-site residues include H328 and D332.

This sequence belongs to the sphingomyelin synthase family. In terms of tissue distribution, brain, heart, kidney, liver, muscle and stomach.

It is found in the golgi apparatus membrane. It catalyses the reaction an N-acylsphing-4-enine + a 1,2-diacyl-sn-glycero-3-phosphocholine = a sphingomyelin + a 1,2-diacyl-sn-glycerol. It carries out the reaction an N-acylsphinganine + a 1,2-diacyl-sn-glycero-3-phosphocholine = an N-acylsphinganine-1-phosphocholine + a 1,2-diacyl-sn-glycerol. The catalysed reaction is an N-acyl-(4R)-4-hydroxysphinganine + a 1,2-diacyl-sn-glycero-3-phosphocholine = an N-acyl-(4R)-4-hydroxysphinganine-phosphocholine + a 1,2-diacyl-sn-glycerol. The enzyme catalyses 1-(9Z-octadecenoyl)-2-acyl-sn-3-glycerol + a sphingomyelin = a 1-(9Z-octadecenoyl)-2-acyl-sn-glycero-3-phosphocholine + an N-acylsphing-4-enine. It catalyses the reaction N-hexadecanoylsphinganine + a 1,2-diacyl-sn-glycero-3-phosphocholine = N-hexadecanoyl-sphinganine-1-phosphocholine + a 1,2-diacyl-sn-glycerol. It carries out the reaction N-hexadecanoyl-(4R)-hydroxysphinganine + a 1,2-diacyl-sn-glycero-3-phosphocholine = N-hexadecanoyl-(4R)-hydroxysphinganine-phosphocholine + a 1,2-diacyl-sn-glycerol. The catalysed reaction is an N-acylsphing-4-enine + a 1,2-diacyl-sn-glycero-3-phosphoethanolamine = an N-acylsphing-4-enine 1-phosphoethanolamine + a 1,2-diacyl-sn-glycerol. Its pathway is sphingolipid metabolism. With respect to regulation, inhibited by bacterial PC-phospholipase C inhibitor D609. Functionally, major sphingomyelin synthase at the Golgi apparatus. Catalyzes the reversible transfer of phosphocholine moiety in sphingomyelin biosynthesis: in the forward reaction transfers phosphocholine head group of phosphatidylcholine (PC) on to ceramide (CER) to form ceramide phosphocholine (sphingomyelin, SM) and diacylglycerol (DAG) as by-product, and in the reverse reaction transfers phosphocholine from SM to DAG to form PC and CER. The direction of the reaction depends on the levels of CER and DAG in Golgi membranes. Converts the newly synthesized CER, that is transported from the endoplasmic reticulum to the trans-Golgi by the Cer transport protein (CERT), to SM. Can form a heteromeric complex with glucosylceramide synthase (GCS) increasing SMS activity and reducing glucosylceramide synthesis, a critical mechanism that controls the metabolic fate of CER in the Golgi. Does not use free phosphorylcholine or CDP-choline as donor. Can also transfer phosphoethanolamine head group of phosphatidylethanolamine (PE) on to CER to form ceramide phosphoethanolamine (CPE). Regulates receptor-mediated signal transduction via mitogenic DAG and proapoptotic CER, as well as via SM, a structural component of membrane rafts that serve as platforms for signal transduction and protein sorting. Plays a role in secretory transport via regulation of DAG pool at the Golgi apparatus and its downstream effects on PRKD1. This is Phosphatidylcholine:ceramide cholinephosphotransferase 1 (SGMS1) from Homo sapiens (Human).